The primary structure comprises 519 residues: (3S,6E)-nerolidol synthase 1 (519 aa).

Mg(2+) contacts are provided by Asp-273, Asp-277, Asp-417, Ser-421, and Glu-425. A DDXXD motif motif is present at residues Asp-273 to Asp-277.

This sequence belongs to the terpene synthase family. Tpsg subfamily. Mg(2+) is required as a cofactor. Requires Mn(2+) as cofactor. In terms of tissue distribution, expressed in receptacle tissue. Not detected in leaves or green fruit.

Its subcellular location is the cytoplasm. The protein resides in the cytosol. It catalyses the reaction (2E,6E)-farnesyl diphosphate + H2O = (3S,6E)-nerolidol + diphosphate. Its pathway is secondary metabolite biosynthesis; terpenoid biosynthesis. Functionally, involved in monoterpene (C10) and sesquiterpene (C15) biosynthesis. Converts geranyl diphosphate (GPP) into S-linalool and farnesyl diphosphate (FPP) into (3S)-E-nerolidol. Exclusively present and highly expressed in the fruit of cultivated (octaploid) varieties. This is (3S,6E)-nerolidol synthase 1 from Fragaria ananassa (Strawberry).